The following is a 492-amino-acid chain: Catalase isozyme 1 (492 aa).

Residues His-65 and Asn-138 contribute to the active site. Heme is bound at residue Tyr-348.

It belongs to the catalase family. As to quaternary structure, homotetramer. It depends on heme as a cofactor. In terms of tissue distribution, in whole endosperms (aleurones plus starchy endosperm), in isolated aleurones and in developing seeds.

The protein localises to the peroxisome. The protein resides in the glyoxysome. It carries out the reaction 2 H2O2 = O2 + 2 H2O. Functionally, occurs in almost all aerobically respiring organisms and serves to protect cells from the toxic effects of hydrogen peroxide. This Hordeum vulgare (Barley) protein is Catalase isozyme 1 (CAT1).